The following is a 112-amino-acid chain: MALGHYEIKKAKNGQYHFNLKASNGEIILSSEMYASKASAENGIASVQSNSPQESQYELKHNTKNEPYFVLKAKNHQVIGVSESYSSPTAAKNGIASVMKNGLSTVIKDLTL.

A run of 2 repeats spans residues 11-59 (AKNG…QYEL) and 62-110 (NTKN…IKDL).

The protein belongs to the UPF0339 family. Duplicated subfamily.

The chain is UPF0339 protein YegP (yegP) from Yersinia pestis.